The sequence spans 354 residues: Nicotinate-nucleotide--dimethylbenzimidazole phosphoribosyltransferase (354 aa).

The Proton acceptor role is filled by Glu-317.

It belongs to the CobT family. Homodimer.

The catalysed reaction is 5,6-dimethylbenzimidazole + nicotinate beta-D-ribonucleotide = alpha-ribazole 5'-phosphate + nicotinate + H(+). The protein operates within nucleoside biosynthesis; alpha-ribazole biosynthesis; alpha-ribazole from 5,6-dimethylbenzimidazole: step 1/2. Catalyzes the synthesis of alpha-ribazole-5'-phosphate from nicotinate mononucleotide (NAMN) and 5,6-dimethylbenzimidazole (DMB). The sequence is that of Nicotinate-nucleotide--dimethylbenzimidazole phosphoribosyltransferase from Salmonella arizonae (strain ATCC BAA-731 / CDC346-86 / RSK2980).